The primary structure comprises 264 residues: tRNA-uridine aminocarboxypropyltransferase A (264 aa).

Residues Cys-25, Cys-28, Cys-35, and Cys-37 each coordinate Zn(2+). Positions 144–147 (DATW) match the DXTW motif. The segment at 245 to 264 (RPKLLKKRFQNQQPLEQEEE) is disordered. Residues 254–264 (QNQQPLEQEEE) are compositionally biased toward polar residues.

Belongs to the TDD superfamily. DTWD2 family.

It carries out the reaction a uridine in tRNA + S-adenosyl-L-methionine = a 3-[(3S)-3-amino-3-carboxypropyl]uridine in tRNA + S-methyl-5'-thioadenosine + H(+). Functionally, catalyzes the formation of 3-(3-amino-3-carboxypropyl)uridine (acp3U) at position 20a in the D-loop of several cytoplasmic tRNAs (acp3U(20a)). The chain is tRNA-uridine aminocarboxypropyltransferase A from Arabidopsis thaliana (Mouse-ear cress).